We begin with the raw amino-acid sequence, 1648 residues long: Vitellogenin-6 (1648 aa).

Positions 1–15 (MRFAVLLALFGLALA) are cleaved as a signal peptide. A Vitellogenin domain is found at 26–691 (YRSGREYRYQ…SNDSVLPKEI (666 aa)). 2 disulfide bridges follow: cysteine 178/cysteine 203 and cysteine 219/cysteine 222. 3 N-linked (GlcNAc...) asparagine glycosylation sites follow: asparagine 237, asparagine 371, and asparagine 683. The disordered stretch occupies residues 1070–1092 (EKNVEYEQEDKEPKSSQLQSQIR). Asparagine 1295 is a glycosylation site (N-linked (GlcNAc...) asparagine). One can recognise a VWFD domain in the interval 1346–1514 (PECIVKSKEI…SYLSKDDECE (169 aa)). 2 cysteine pairs are disulfide-bonded: cysteine 1348-cysteine 1477 and cysteine 1370-cysteine 1513. Residues asparagine 1584 and asparagine 1617 are each glycosylated (N-linked (GlcNAc...) asparagine).

In terms of processing, the precursor protein is probably further processed into vitellin polypeptides VT2 and VT3. Both VT2 and VT3 polypeptides seem to be N-glycosylated.

The protein localises to the secreted. Functionally, precursor of the egg-yolk proteins that are sources of nutrients during embryonic development. In Oscheius tipulae, this protein is Vitellogenin-6 (vit-6).